The following is a 311-amino-acid chain: Probable cell division protein WhiA (311 aa).

Positions 274 to 307 (SLKELGSLLTPPLTKSGVNHRFRKLELIAEKIRN) form a DNA-binding region, H-T-H motif.

This sequence belongs to the WhiA family.

In terms of biological role, involved in cell division and chromosome segregation. This chain is Probable cell division protein WhiA, found in Carboxydothermus hydrogenoformans (strain ATCC BAA-161 / DSM 6008 / Z-2901).